A 377-amino-acid polypeptide reads, in one-letter code: Protein FAM199X-B (377 aa).

The segment covering 240–254 (KEHSPRQRCTRESWK) has biased composition (basic and acidic residues). The interval 240 to 350 (KEHSPRQRCT…EQRQARKERI (111 aa)) is disordered. A compositionally biased stretch (low complexity) spans 256–301 (TSYSTASTSGVSGASVSSSSASMVSTASSTGSSGGNSASNSSANMS). Positions 319–338 (DSKKRSKQRKLQQKALRKRQ) are enriched in basic residues. Positions 321–349 (KKRSKQRKLQQKALRKRQLKEQRQARKER) form a coiled coil. Residues 339 to 350 (LKEQRQARKERI) show a composition bias toward basic and acidic residues.

The protein belongs to the FAM199 family.

In Xenopus laevis (African clawed frog), this protein is Protein FAM199X-B (fam199x-b).